A 141-amino-acid polypeptide reads, in one-letter code: MMNKRKRVEELGETKHRQVRQRILQEHKNDILENLAFELSDKVRRLRSNASLLASTIRMRGEMRIAAIPRAQRNMHLRDLKNHLSCNVSATPWRTKIKEFYNLDELSSQKSARQPTKTVASSSSSSSKSTTVSKSSSKSQV.

Residues 106-115 are compositionally biased toward polar residues; that stretch reads LSSQKSARQP. The segment at 106–141 is disordered; that stretch reads LSSQKSARQPTKTVASSSSSSSKSTTVSKSSSKSQV. Over residues 116 to 141 the composition is skewed to low complexity; sequence TKTVASSSSSSSKSTTVSKSSSKSQV.

Its subcellular location is the nucleus. Its function is as follows. Has a role in meiosis. This Schizosaccharomyces pombe (strain 972 / ATCC 24843) (Fission yeast) protein is Meiotically up-regulated gene 118 protein (mug118).